We begin with the raw amino-acid sequence, 91 residues long: UPF0250 protein NMA1380 (91 aa).

It belongs to the UPF0250 family.

This Neisseria meningitidis serogroup A / serotype 4A (strain DSM 15465 / Z2491) protein is UPF0250 protein NMA1380.